We begin with the raw amino-acid sequence, 355 residues long: Alanine racemase (355 aa).

K34 acts as the Proton acceptor; specific for D-alanine in catalysis. Position 34 is an N6-(pyridoxal phosphate)lysine (K34). R133 is a substrate binding site. Y249 serves as the catalytic Proton acceptor; specific for L-alanine. M297 is a binding site for substrate.

This sequence belongs to the alanine racemase family. The cofactor is pyridoxal 5'-phosphate.

The enzyme catalyses L-alanine = D-alanine. It participates in amino-acid biosynthesis; D-alanine biosynthesis; D-alanine from L-alanine: step 1/1. Functionally, catalyzes the interconversion of L-alanine and D-alanine. May also act on other amino acids. The protein is Alanine racemase (alr) of Rickettsia peacockii (strain Rustic).